Reading from the N-terminus, the 470-residue chain is Uronate isomerase (470 aa).

This sequence belongs to the metallo-dependent hydrolases superfamily. Uronate isomerase family.

The enzyme catalyses D-glucuronate = D-fructuronate. It catalyses the reaction aldehydo-D-galacturonate = keto-D-tagaturonate. It participates in carbohydrate metabolism; pentose and glucuronate interconversion. In Cutibacterium acnes (strain DSM 16379 / KPA171202) (Propionibacterium acnes), this protein is Uronate isomerase.